Reading from the N-terminus, the 497-residue chain is Putative BTB/POZ domain-containing protein R738 (497 aa).

The BTB domain maps to 16–86; the sequence is SDCKLVLDDG…FYEKSNVINA (71 aa).

The protein belongs to the mimivirus BTB/WD family.

The sequence is that of Putative BTB/POZ domain-containing protein R738 from Acanthamoeba polyphaga (Amoeba).